Reading from the N-terminus, the 471-residue chain is Siroheme synthase (471 aa).

The precorrin-2 dehydrogenase /sirohydrochlorin ferrochelatase stretch occupies residues 1-203; the sequence is MEYLPLFADL…GRLEQAEQAL (203 aa). NAD(+) contacts are provided by residues 22 to 23 and 43 to 44; these read EV and RA. S128 carries the post-translational modification Phosphoserine. A uroporphyrinogen-III C-methyltransferase region spans residues 215-471; sequence GEVALVGAGP…QKRASVVNLA (257 aa). Residue P224 participates in S-adenosyl-L-methionine binding. D247 serves as the catalytic Proton acceptor. K269 (proton donor) is an active-site residue. S-adenosyl-L-methionine-binding positions include 300 to 302, I305, 330 to 331, M382, and G411; these read GGD and TA.

It in the N-terminal section; belongs to the precorrin-2 dehydrogenase / sirohydrochlorin ferrochelatase family. This sequence in the C-terminal section; belongs to the precorrin methyltransferase family.

It catalyses the reaction uroporphyrinogen III + 2 S-adenosyl-L-methionine = precorrin-2 + 2 S-adenosyl-L-homocysteine + H(+). The enzyme catalyses precorrin-2 + NAD(+) = sirohydrochlorin + NADH + 2 H(+). It carries out the reaction siroheme + 2 H(+) = sirohydrochlorin + Fe(2+). The protein operates within cofactor biosynthesis; adenosylcobalamin biosynthesis; precorrin-2 from uroporphyrinogen III: step 1/1. It functions in the pathway cofactor biosynthesis; adenosylcobalamin biosynthesis; sirohydrochlorin from precorrin-2: step 1/1. Its pathway is porphyrin-containing compound metabolism; siroheme biosynthesis; precorrin-2 from uroporphyrinogen III: step 1/1. It participates in porphyrin-containing compound metabolism; siroheme biosynthesis; siroheme from sirohydrochlorin: step 1/1. The protein operates within porphyrin-containing compound metabolism; siroheme biosynthesis; sirohydrochlorin from precorrin-2: step 1/1. Multifunctional enzyme that catalyzes the SAM-dependent methylations of uroporphyrinogen III at position C-2 and C-7 to form precorrin-2 via precorrin-1. Then it catalyzes the NAD-dependent ring dehydrogenation of precorrin-2 to yield sirohydrochlorin. Finally, it catalyzes the ferrochelation of sirohydrochlorin to yield siroheme. The protein is Siroheme synthase of Sodalis glossinidius (strain morsitans).